A 155-amino-acid chain; its full sequence is Small ribosomal subunit protein eS19B (155 aa).

It belongs to the eukaryotic ribosomal protein eS19 family.

This is Small ribosomal subunit protein eS19B (RpS19b) from Drosophila melanogaster (Fruit fly).